A 251-amino-acid polypeptide reads, in one-letter code: Small ribosomal subunit protein uS2 (251 aa).

Residues 232–251 (EAIAEMDEQVEEDAEEASND) are disordered.

This sequence belongs to the universal ribosomal protein uS2 family.

This is Small ribosomal subunit protein uS2 from Chlorobaculum parvum (strain DSM 263 / NCIMB 8327) (Chlorobium vibrioforme subsp. thiosulfatophilum).